The following is a 360-amino-acid chain: Peptide chain release factor 1 (360 aa).

The residue at position 235 (Gln-235) is an N5-methylglutamine. Positions 284-313 (AKRQQAEASTRRNLLGSGDRSDRNRTYNFP) are disordered.

It belongs to the prokaryotic/mitochondrial release factor family. Post-translationally, methylated by PrmC. Methylation increases the termination efficiency of RF1.

The protein resides in the cytoplasm. Its function is as follows. Peptide chain release factor 1 directs the termination of translation in response to the peptide chain termination codons UAG and UAA. The polypeptide is Peptide chain release factor 1 (Salmonella schwarzengrund (strain CVM19633)).